A 209-amino-acid chain; its full sequence is Small ribosomal subunit protein uS4 (209 aa).

In terms of domain architecture, S4 RNA-binding spans 99–164; it reads GRLDSVVYRM…QLRVKAALEA (66 aa).

Belongs to the universal ribosomal protein uS4 family. In terms of assembly, part of the 30S ribosomal subunit. Contacts protein S5. The interaction surface between S4 and S5 is involved in control of translational fidelity.

One of the primary rRNA binding proteins, it binds directly to 16S rRNA where it nucleates assembly of the body of the 30S subunit. Its function is as follows. With S5 and S12 plays an important role in translational accuracy. The protein is Small ribosomal subunit protein uS4 of Aromatoleum aromaticum (strain DSM 19018 / LMG 30748 / EbN1) (Azoarcus sp. (strain EbN1)).